The following is a 393-amino-acid chain: DNA primase large subunit PriL (393 aa).

4 residues coordinate [4Fe-4S] cluster: C230, C339, C350, and C356.

It belongs to the eukaryotic-type primase large subunit family. As to quaternary structure, heterodimer of a small subunit (PriS) and a large subunit (PriL). Requires [4Fe-4S] cluster as cofactor.

Its function is as follows. Regulatory subunit of DNA primase, an RNA polymerase that catalyzes the synthesis of short RNA molecules used as primers for DNA polymerase during DNA replication. Stabilizes and modulates the activity of the small subunit, increasing the rate of DNA synthesis, and conferring RNA synthesis capability. The DNA polymerase activity may enable DNA primase to also catalyze primer extension after primer synthesis. May also play a role in DNA repair. Displays gap-filling and strand-displacement activities. The chain is DNA primase large subunit PriL from Pyrococcus abyssi (strain GE5 / Orsay).